Reading from the N-terminus, the 425-residue chain is Serine--tRNA ligase (425 aa).

Thr-230–Glu-232 contacts L-serine. Arg-261–Glu-263 contacts ATP. L-serine is bound at residue Glu-284. Position 348 to 351 (Glu-348 to Ser-351) interacts with ATP. Ser-384 is a binding site for L-serine.

It belongs to the class-II aminoacyl-tRNA synthetase family. Type-1 seryl-tRNA synthetase subfamily. In terms of assembly, homodimer. The tRNA molecule binds across the dimer.

The protein localises to the cytoplasm. It carries out the reaction tRNA(Ser) + L-serine + ATP = L-seryl-tRNA(Ser) + AMP + diphosphate + H(+). The enzyme catalyses tRNA(Sec) + L-serine + ATP = L-seryl-tRNA(Sec) + AMP + diphosphate + H(+). The protein operates within aminoacyl-tRNA biosynthesis; selenocysteinyl-tRNA(Sec) biosynthesis; L-seryl-tRNA(Sec) from L-serine and tRNA(Sec): step 1/1. In terms of biological role, catalyzes the attachment of serine to tRNA(Ser). Is also able to aminoacylate tRNA(Sec) with serine, to form the misacylated tRNA L-seryl-tRNA(Sec), which will be further converted into selenocysteinyl-tRNA(Sec). In Streptococcus pyogenes serotype M12 (strain MGAS2096), this protein is Serine--tRNA ligase.